The sequence spans 337 residues: MPPTVNMGIPGASRTALGSVAGDVTGKRVLLAEPRGYCAGVDRAVETVERALEKHGAPIYVRHEIVHNRYVVDTLAKAGAIFVEQTDEVPEGAIVVFSAHGVAPTVHEEAAARHLRTIDATCPLVTKVHNEAKRFARDDYDILLVGHEGHEEVVGTAGEAPDHVQVVDNPDAVDKVTVRDPNKVIWLSQTTLSVDETMETVRRLREKFPTLQDPPSDDICYATQNRQVAVKAMAPECELVIVVGSKNSSNSVRLVEVALGAGASAAHLVDYADDIDPAWFDGVTTVGVTSGASVPEILVRGVLDRLAEHGYDVVQPVTTANETLVFALPREIRPARQ.

Cys38 serves as a coordination point for [4Fe-4S] cluster. 2 residues coordinate (2E)-4-hydroxy-3-methylbut-2-enyl diphosphate: His67 and His100. Dimethylallyl diphosphate contacts are provided by His67 and His100. 2 residues coordinate isopentenyl diphosphate: His67 and His100. Residue Cys122 coordinates [4Fe-4S] cluster. Residue His150 coordinates (2E)-4-hydroxy-3-methylbut-2-enyl diphosphate. A dimethylallyl diphosphate-binding site is contributed by His150. Residue His150 coordinates isopentenyl diphosphate. Glu152 functions as the Proton donor in the catalytic mechanism. Thr190 serves as a coordination point for (2E)-4-hydroxy-3-methylbut-2-enyl diphosphate. [4Fe-4S] cluster is bound at residue Cys220. (2E)-4-hydroxy-3-methylbut-2-enyl diphosphate-binding residues include Ser248, Ser249, Asn250, and Ser293. The dimethylallyl diphosphate site is built by Ser248, Ser249, Asn250, and Ser293. 4 residues coordinate isopentenyl diphosphate: Ser248, Ser249, Asn250, and Ser293.

The protein belongs to the IspH family. [4Fe-4S] cluster is required as a cofactor.

The enzyme catalyses isopentenyl diphosphate + 2 oxidized [2Fe-2S]-[ferredoxin] + H2O = (2E)-4-hydroxy-3-methylbut-2-enyl diphosphate + 2 reduced [2Fe-2S]-[ferredoxin] + 2 H(+). It carries out the reaction dimethylallyl diphosphate + 2 oxidized [2Fe-2S]-[ferredoxin] + H2O = (2E)-4-hydroxy-3-methylbut-2-enyl diphosphate + 2 reduced [2Fe-2S]-[ferredoxin] + 2 H(+). It functions in the pathway isoprenoid biosynthesis; dimethylallyl diphosphate biosynthesis; dimethylallyl diphosphate from (2E)-4-hydroxy-3-methylbutenyl diphosphate: step 1/1. It participates in isoprenoid biosynthesis; isopentenyl diphosphate biosynthesis via DXP pathway; isopentenyl diphosphate from 1-deoxy-D-xylulose 5-phosphate: step 6/6. In terms of biological role, catalyzes the conversion of 1-hydroxy-2-methyl-2-(E)-butenyl 4-diphosphate (HMBPP) into a mixture of isopentenyl diphosphate (IPP) and dimethylallyl diphosphate (DMAPP). Acts in the terminal step of the DOXP/MEP pathway for isoprenoid precursor biosynthesis. This is 4-hydroxy-3-methylbut-2-enyl diphosphate reductase from Mycolicibacterium vanbaalenii (strain DSM 7251 / JCM 13017 / BCRC 16820 / KCTC 9966 / NRRL B-24157 / PYR-1) (Mycobacterium vanbaalenii).